The chain runs to 946 residues: MGKFGTTNKSTENLLRDKFVPETSPTNIPTDVLIKQGQITDSTESLIHGGAERYIVNALKPIELNKTEGFFEDPPFHLPSPPVDSTNLEYEDVTDLPKNGLRYDLNDISVEVIEDLYRQIEAFLVHFKLSRSFLQIFKNYVNILIQEGINPLRDEYFTILEDELKGFFTFNSVIEEILEIFLIHPRNKFIALSLAEYTYAKNKIRRHFNHWKTVCELNEEANRFANQAKLRVQEAVFYIWSDKTLKYSQMANDEAESFRNTWLLFRSFQQWITLTQTLKEQSRLADQAFLNKMFRKILKAQEHWKHLETVNTDNIKKIFLRTTFHIWKLRHKEINYHGLERRIFERIKQKVINYEYNKSIAEKVRSFSLQRKYLNKWEKKNIENEDKLGALYELENKFIKQKFFRKLNRSFQHSQQEAIAKSKLNQTLLRCVFEKMWLKRFEDHLHLYSIVSLKEANLVKRIFHSWKKLLYIDLKASDYSRTNLLKSSLRSWKLEVKLKIFEQKCKKSIQASAYRTWRKRIQYGKISSEHVKTAFCAKYLGVWKRRMLQMNSMNDEASKFYEEGLVNECLAIWKERLIKTKELEDRYNFLCKTHAILTVKRTLMHIDNVHLLYTKLAPSMDRVKLSKAFLKWRKATRFKVRHKLNDILHVYEKSKERELQSQLFNAWRNRFCFYTEECNIQAISKRNYQLEKMVLKKFRERLLEIVKSEELADEVREEFVLVKTFYIWKTHLDEIFYMSTLLEQSEANKQFIITSKFLKMWSLRFLKIKRNDETVEVFRHRWDRATVRGLLLLWKNRSDSSPKRRKDFNLKHELKTPIRSDSQNASTIPGSERIKQHRMEAMKSHYSRARRAIPSPVKSSSVLDSTAKKQINLESTTGLNGSPTRGKPLRYSPRRTTRNMPSKVDHIDFGRIPAVPFSLSANSPKIDQDMDYIREHDKSPLSRKRQ.

Ser-10 and Ser-855 each carry phosphoserine. 2 disordered regions span residues 846–901 (YSRA…RNMP) and 917–946 (FSLS…RKRQ). Positions 857–883 (VKSSSVLDSTAKKQINLESTTGLNGSP) are enriched in polar residues. Residues 926–940 (IDQDMDYIREHDKSP) are compositionally biased toward basic and acidic residues.

Belongs to the SFI1 family. As to quaternary structure, forms a complex with CDC31 and interacts with SPC110. Associates with the spindle pole body half bridge.

The protein localises to the cytoplasm. It is found in the cytoskeleton. It localises to the spindle pole. In terms of biological role, component of the spindle pole body (SPB) half-bridge involved in the initial steps of SPB duplication. The chain is Protein SFI1 (SFI1) from Saccharomyces cerevisiae (strain ATCC 204508 / S288c) (Baker's yeast).